The chain runs to 796 residues: Probable coatomer subunit beta' (796 aa).

6 WD repeats span residues 4–42 (LDFQRKLLSHTERVKAVDFHPTEPWVIASHYNGQVGIWN), 46–84 (QTLVRSFDINDVPIRACAFIARKNWFVCGSDDFQVRVYN), 88–126 (GEKVTQFEAHPDYIRALVVHPTQPFLLTSSDDMTIKCFN), 131–170 (WKCVQTFEGHSRYVMSLAINPKDTNTFASSCLDGTVKVWS), 172–214 (GSSV…KVWD), and 218–256 (KACVRILEGHTNNVSFAFFHSKFPIIISGSEDGTVKIWH).

This sequence belongs to the WD repeat COPB2 family. Oligomeric complex that consists of at least the alpha, beta, beta', gamma, delta, epsilon and zeta subunits.

The protein resides in the cytoplasm. It localises to the golgi apparatus membrane. Its subcellular location is the cytoplasmic vesicle. The protein localises to the COPI-coated vesicle membrane. Functionally, the coatomer is a cytosolic protein complex that binds to dilysine motifs and reversibly associates with Golgi non-clathrin-coated vesicles, which further mediate biosynthetic protein transport from the ER, via the Golgi up to the trans Golgi network. Coatomer complex is required for budding from Golgi membranes, and is essential for the retrograde Golgi-to-ER transport of dilysine-tagged proteins. The polypeptide is Probable coatomer subunit beta' (sec27) (Schizosaccharomyces pombe (strain 972 / ATCC 24843) (Fission yeast)).